A 63-amino-acid chain; its full sequence is Conotoxin Tx-D0111 (63 aa).

A signal peptide spans 1 to 19 (MRCLPVFVILLLLIASTPS). A propeptide spanning residues 20–47 (DTVPLKTKDDMPQASFHGNARRTLQMLS) is cleaved from the precursor.

Belongs to the conotoxin T superfamily. Post-translationally, contains 2 disulfide bonds that can be either 'C1-C3, C2-C4' or 'C1-C4, C2-C3', since these disulfide connectivities have been observed for conotoxins with cysteine framework V (for examples, see AC P0DQQ7 and AC P81755). As to expression, expressed by the venom duct.

The protein resides in the secreted. The protein is Conotoxin Tx-D0111 of Conus textile (Cloth-of-gold cone).